Here is a 324-residue protein sequence, read N- to C-terminus: Porphobilinogen deaminase 1 (324 aa).

An S-(dipyrrolylmethanemethyl)cysteine modification is found at Cys-249.

It belongs to the HMBS family. In terms of assembly, monomer. The cofactor is dipyrromethane.

It catalyses the reaction 4 porphobilinogen + H2O = hydroxymethylbilane + 4 NH4(+). Its pathway is porphyrin-containing compound metabolism; protoporphyrin-IX biosynthesis; coproporphyrinogen-III from 5-aminolevulinate: step 2/4. Tetrapolymerization of the monopyrrole PBG into the hydroxymethylbilane pre-uroporphyrinogen in several discrete steps. In Streptomyces avermitilis (strain ATCC 31267 / DSM 46492 / JCM 5070 / NBRC 14893 / NCIMB 12804 / NRRL 8165 / MA-4680), this protein is Porphobilinogen deaminase 1 (hemC1).